Here is a 540-residue protein sequence, read N- to C-terminus: Methionine--tRNA ligase 1 (540 aa).

Residues 10 to 20 (PYANGSLHLGH) carry the 'HIGH' region motif. Residues C141, C144, C153, and C156 each contribute to the Zn(2+) site. A 'KMSKS' region motif is present at residues 327-331 (KISTS). T330 serves as a coordination point for ATP.

Belongs to the class-I aminoacyl-tRNA synthetase family. MetG type 1 subfamily. As to quaternary structure, monomer. The cofactor is Zn(2+).

The protein localises to the cytoplasm. It carries out the reaction tRNA(Met) + L-methionine + ATP = L-methionyl-tRNA(Met) + AMP + diphosphate. Functionally, is required not only for elongation of protein synthesis but also for the initiation of all mRNA translation through initiator tRNA(fMet) aminoacylation. This is Methionine--tRNA ligase 1 from Alkaliphilus oremlandii (strain OhILAs) (Clostridium oremlandii (strain OhILAs)).